Here is a 485-residue protein sequence, read N- to C-terminus: MVGRRKALLFSLCFFFLSLPSFSSLPSFQTLFPNSHSLPCASPVSFQPDSDSESLLESEFESGSDSESSSSITLNLDHIDALSSNKTPDELFSSRLQRDSRRVKSIATLAAQIPGRNVTHAPRPGGFSSSVVSGLSQGSGEYFTRLGVGTPARYVYMVLDTGSDIVWLQCAPCRRCYSQSDPIFDPRKSKTYATIPCSSPHCRRLDSAGCNTRRKTCLYQVSYGDGSFTVGDFSTETLTFRRNRVKGVALGCGHDNEGLFVGAAGLLGLGKGKLSFPGQTGHRFNQKFSYCLVDRSASSKPSSVVFGNAAVSRIARFTPLLSNPKLDTFYYVGLLGISVGGTRVPGVTASLFKLDQIGNGGVIIDSGTSVTRLIRPAYIAMRDAFRVGAKTLKRAPDFSLFDTCFDLSNMNEVKVPTVVLHFRGADVSLPATNYLIPVDTNGKFCFAFAGTMGGLSIIGNIQQQGFRVVYDLASSRVGFAPGGCA.

An N-terminal signal peptide occupies residues 1-23 (MVGRRKALLFSLCFFFLSLPSFS). The interval 43 to 71 (PVSFQPDSDSESLLESEFESGSDSESSSS) is disordered. Over residues 50-64 (SDSESLLESEFESGS) the composition is skewed to acidic residues. One can recognise a Peptidase A1 domain in the interval 142-480 (YFTRLGVGTP…DLASSRVGFA (339 aa)). Residues Asp160 and Asp365 contribute to the active site.

The protein belongs to the peptidase A1 family.

Aspartyl protease. Not able to cleave BAG6. The sequence is that of Aspartyl protease family protein 2 from Arabidopsis thaliana (Mouse-ear cress).